The following is a 201-amino-acid chain: Recombination protein RecR (201 aa).

The C4-type zinc-finger motif lies at 57 to 72; that stretch reads CQVCYSLSDNDICDIC. The Toprim domain occupies 80-177; that stretch reads NKICIVESYP…RITRITYGIS (98 aa).

It belongs to the RecR family.

May play a role in DNA repair. It seems to be involved in an RecBC-independent recombinational process of DNA repair. It may act with RecF and RecO. The protein is Recombination protein RecR of Brachyspira hyodysenteriae (strain ATCC 49526 / WA1).